The chain runs to 263 residues: MKKIHPSAVIEEGAQLGDDVVIEAYAYVSKDAKIGNNVVIKQGARILSDTTIGDHSRVFSYAIVGDIPQDISYKEEQKSGVVIGKNATIREFATINSGTAKGDGFTRIGDNAFIMAYCHIAHDCLLGNNIILANNATLAGHVELGDFTVVGGLTPIHQFVKVGEGCMIAGASALSQDIVPFCLAEGNRASIRSLNLVGIRRRFDKDEVDRLSRAFKTLFRQGDLKENAKNLLENQESENVKKMCHFILETKRGIPVYRGKNNA.

Belongs to the transferase hexapeptide repeat family. LpxA subfamily. Homotrimer.

Its subcellular location is the cytoplasm. The enzyme catalyses a (3R)-hydroxyacyl-[ACP] + UDP-N-acetyl-alpha-D-glucosamine = a UDP-3-O-[(3R)-3-hydroxyacyl]-N-acetyl-alpha-D-glucosamine + holo-[ACP]. It functions in the pathway glycolipid biosynthesis; lipid IV(A) biosynthesis; lipid IV(A) from (3R)-3-hydroxytetradecanoyl-[acyl-carrier-protein] and UDP-N-acetyl-alpha-D-glucosamine: step 1/6. Functionally, involved in the biosynthesis of lipid A, a phosphorylated glycolipid that anchors the lipopolysaccharide to the outer membrane of the cell. This Campylobacter jejuni subsp. jejuni serotype O:2 (strain ATCC 700819 / NCTC 11168) protein is Acyl-[acyl-carrier-protein]--UDP-N-acetylglucosamine O-acyltransferase.